Consider the following 152-residue polypeptide: Large ribosomal subunit protein uL22 (152 aa).

This sequence belongs to the universal ribosomal protein uL22 family. Part of the 50S ribosomal subunit.

Its function is as follows. This protein binds specifically to 23S rRNA. It makes multiple contacts with different domains of the 23S rRNA in the assembled 50S subunit and ribosome. In terms of biological role, the globular domain of the protein is located near the polypeptide exit tunnel on the outside of the subunit, while an extended beta-hairpin is found that lines the wall of the exit tunnel in the center of the 70S ribosome. The polypeptide is Large ribosomal subunit protein uL22 (Nitrosopumilus maritimus (strain SCM1)).